A 210-amino-acid polypeptide reads, in one-letter code: Isochorismatase domain-containing protein 2B (210 aa).

Lysine 178 bears the N6-succinyllysine mark.

This sequence belongs to the isochorismatase family. As to quaternary structure, interacts with CDKN2A. In terms of tissue distribution, ubiquitous. Expressed predominantly in uterus, stomach and urinary tract.

The protein resides in the cytoplasm. It localises to the nucleus. This chain is Isochorismatase domain-containing protein 2B (Isoc2b), found in Mus musculus (Mouse).